We begin with the raw amino-acid sequence, 316 residues long: Pantothenate kinase (316 aa).

95–102 (GSVAVGKS) contacts ATP.

It belongs to the prokaryotic pantothenate kinase family.

The protein localises to the cytoplasm. The catalysed reaction is (R)-pantothenate + ATP = (R)-4'-phosphopantothenate + ADP + H(+). It functions in the pathway cofactor biosynthesis; coenzyme A biosynthesis; CoA from (R)-pantothenate: step 1/5. This Shewanella baltica (strain OS195) protein is Pantothenate kinase.